A 105-amino-acid chain; its full sequence is Large ribosomal subunit protein bL21 (105 aa).

Belongs to the bacterial ribosomal protein bL21 family. Part of the 50S ribosomal subunit. Contacts protein L20.

This protein binds to 23S rRNA in the presence of protein L20. This chain is Large ribosomal subunit protein bL21, found in Bacteroides fragilis (strain YCH46).